We begin with the raw amino-acid sequence, 305 residues long: 4-diphosphocytidyl-2-C-methyl-D-erythritol kinase (305 aa).

The active site involves K15. P99–S109 serves as a coordination point for ATP. D141 is an active-site residue.

It belongs to the GHMP kinase family. IspE subfamily.

The enzyme catalyses 4-CDP-2-C-methyl-D-erythritol + ATP = 4-CDP-2-C-methyl-D-erythritol 2-phosphate + ADP + H(+). Its pathway is isoprenoid biosynthesis; isopentenyl diphosphate biosynthesis via DXP pathway; isopentenyl diphosphate from 1-deoxy-D-xylulose 5-phosphate: step 3/6. Its function is as follows. Catalyzes the phosphorylation of the position 2 hydroxy group of 4-diphosphocytidyl-2C-methyl-D-erythritol. The sequence is that of 4-diphosphocytidyl-2-C-methyl-D-erythritol kinase from Marinomonas sp. (strain MWYL1).